Reading from the N-terminus, the 255-residue chain is Enkurin (255 aa).

Over residues 1-10 (MDSPCTSESI) the composition is skewed to polar residues. Disordered regions lie at residues 1 to 25 (MDSP…PQHP) and 67 to 96 (SKEK…DHPV). Residues 73-83 (PPKKKFNRCSP) are compositionally biased toward basic residues. Residues 83-89 (PKKPAVP) carry the SH3-binding motif. The region spanning 160–252 (KRNEDVKKAQ…VIEKHKIIYI (93 aa)) is the Enkurin domain. The interaction with TRPC proteins stretch occupies residues 160-255 (KRNEDVKKAQ…KHKIIYIANK (96 aa)). The 12-residue stretch at 176–187 (IQENLKKAAMKR) folds into the IQ domain.

As to quaternary structure, microtubule inner protein component of sperm flagellar doublet microtubules. Binds calmodulin via its IQ domain. Interacts with TRPC1, TRPC2, TRPC5, but not TRPC3. Interacts with CFAP45. High expression in testis and vomeronasal organ and lower expression in ovary, heart, lung, and brain. Not expressed in other tissues.

Its subcellular location is the cytoplasm. It is found in the cytoskeleton. The protein resides in the cilium axoneme. The protein localises to the flagellum axoneme. Adapter that functions to localize a calcium-sensitive signal transduction machinery in sperm to a calcium-permeable ion channel. Microtubule inner protein (MIP) part of the dynein-decorated doublet microtubules (DMTs) in cilia axoneme, which is required for motile cilia beating. The polypeptide is Enkurin (Enkur) (Mus musculus (Mouse)).